Here is a 206-residue protein sequence, read N- to C-terminus: Sclerostin domain-containing protein 1 (206 aa).

The signal sequence occupies residues 1–23; sequence MLPPAIHFYLLPLACILMKSCLA. N-linked (GlcNAc...) asparagine glycosylation occurs at Asn47. 4 disulfides stabilise this stretch: Cys75/Cys133, Cys89/Cys147, Cys100/Cys163, and Cys104/Cys165. Positions 75–170 constitute a CTCK domain; sequence CRELRSTKYI…TACKCKRYTR (96 aa). An N-linked (GlcNAc...) asparagine glycan is attached at Asn173. Positions 176-206 are disordered; the sequence is SHNFESMSPAKPVQHHRERKRASKSSKHSMS. Residues 188 to 206 show a composition bias toward basic residues; sequence VQHHRERKRASKSSKHSMS.

Belongs to the sclerostin family. As to quaternary structure, interacts with BMP2, BMP4, BMP6 and BMP7 with high affinity.

Its subcellular location is the secreted. Directly antagonizes activity of BMP2, BMP4, BMP6 and BMP7 in a dose-dependent manner. Enhances Wnt signaling and inhibits TGF-beta signaling. May be involved in the onset of endometrial receptivity for implantation/sensitization for the decidual cell reaction. The protein is Sclerostin domain-containing protein 1 (SOSTDC1) of Pongo abelii (Sumatran orangutan).